A 26-amino-acid chain; its full sequence is Mucus envelope protein (26 aa).

Glycosylated. Produced by the opercular gland in the gill cavity and secreted as part of the mucus cocoon.

It localises to the secreted. Exhibits antibacterial activity. May play a role in protection against parasite settlement. The chain is Mucus envelope protein from Scarus vetula (Queen parrotfish).